Here is an 834-residue protein sequence, read N- to C-terminus: ATP-dependent DNA helicase fml1 (834 aa).

Residues 80 to 248 (IVQKALFENV…NVIDSLHISR (169 aa)) form the Helicase ATP-binding domain. 93–100 (LPTGLGKT) lines the ATP pocket. Positions 196–199 (DEAH) match the DEAH box motif. One can recognise a Helicase C-terminal domain in the interval 416–582 (HLERIVTEYF…GLSLSEKSYR (167 aa)). Residues 650 to 690 (EESPFEICPVTYSIEQEKKLEKYKRVCLRGLDIHRNRRLSQ) are interaction with MHF complex. Residues 738–769 (NSTDRDTKQPKMHDFRQPLHPNPMTTLKRKGQ) form a disordered region. Basic and acidic residues predominate over residues 740–754 (TDRDTKQPKMHDFRQ).

Belongs to the DEAD box helicase family. DEAH subfamily. FANCM sub-subfamily.

The protein localises to the cytoplasm. Its subcellular location is the nucleus. It is found in the nucleolus. It catalyses the reaction ATP + H2O = ADP + phosphate + H(+). In terms of biological role, ATP-dependent DNA helicase involved in DNA damage repair by homologous recombination and in genome maintenance. Capable of unwinding D-loops. Plays a role in limiting crossover recombination during mitotic DNA double-strand break (DSB) repair. Component of a FANCM-MHF complex which promotes gene conversion at blocked replication forks, probably by reversal of the stalled fork. FANCM-MHF also promotes non-crossover recombination in meiotic cells. The polypeptide is ATP-dependent DNA helicase fml1 (Schizosaccharomyces pombe (strain 972 / ATCC 24843) (Fission yeast)).